Reading from the N-terminus, the 247-residue chain is Peroxisomal membrane protein 11A (247 aa).

Topologically, residues 1-83 (MDAFIRFTNQ…SVRATDLVPR (83 aa)) are cytoplasmic. A helical membrane pass occupies residues 84-105 (ICLTLASLNRVIYFICDTVLFV). Topologically, residues 106–219 (RSTGLASGVN…DQLGIYKSNP (114 aa)) are lumenal. The helical transmembrane segment at 220 to 239 (GIIGLGGLVSSVAGIITVAY) threads the bilayer. The interval 220 to 239 (GIIGLGGLVSSVAGIITVAY) is required for homodimerization, interaction with PEX11G, and peroxisomal localization. Residues 240-247 (PQMKLKTQ) are Cytoplasmic-facing.

Belongs to the peroxin-11 family. Homodimer. Heterodimer with PEX11G. Probably interacts with COPB2 and COPA. Interacts with PEX19. Interacts with FIS1.

Its subcellular location is the peroxisome membrane. Its function is as follows. May be involved in peroxisomal proliferation and may regulate peroxisomes division. May mediate binding of coatomer proteins to the peroxisomal membrane. Promotes membrane protrusion and elongation on the peroxisomal surface. The polypeptide is Peroxisomal membrane protein 11A (PEX11A) (Bos taurus (Bovine)).